We begin with the raw amino-acid sequence, 1107 residues long: DNA polymerase delta catalytic subunit (1107 aa).

A disordered region spans residues 1-34 (MDGKRRPGPGPGVPPKRARGGLWDDDDAPRPSQF). The Nuclear localization signal motif lies at 4–19 (KRRPGPGPGVPPKRAR). Position 19 is an omega-N-methylarginine (Arg-19). Residue Lys-574 forms a Glycyl lysine isopeptide (Lys-Gly) (interchain with G-Cter in SUMO2) linkage. Zn(2+) contacts are provided by Cys-1012, Cys-1015, Cys-1026, and Cys-1029. A CysA-type zinc finger spans residues 1012–1029 (CIGCRTVLSHQGAVCEFC). The [4Fe-4S] cluster site is built by Cys-1058, Cys-1061, Cys-1071, and Cys-1076. The CysB motif signature appears at 1058–1076 (CQRCQGSLHEDVICTSRDC).

This sequence belongs to the DNA polymerase type-B family. Component of the tetrameric DNA polymerase delta complex (Pol-delta4), which consists of POLD1/p125, POLD2/p50, POLD3/p66/p68 and POLD4/p12, with POLD1 bearing both DNA polymerase and 3' to 5' proofreading exonuclease activities. Within Pol-delta4, directly interacts with POLD2 and POLD4. Following genotoxic stress by DNA-damaging agents, such as ultraviolet light and methyl methanesulfonate, or by replication stress induced by treatment with hydroxyurea or aphidicolin, Pol-delta4 is converted into a trimeric form of the complex (Pol-delta3) by POLD4 degradation. Pol-delta3 is the major form at S phase replication sites and DNA damage sites. POLD1 displays different catalytic properties depending upon the complex it is found in. It exhibits higher proofreading activity and fidelity than Pol-delta4, making it particularly well suited to respond to DNA damage. Directly interacts with PCNA, as do POLD3 and POLD4; this interaction stimulates Pol-delta4 polymerase activity. As POLD2 and POLD4, directly interacts with WRNIP1; this interaction stimulates DNA polymerase delta-mediated DNA synthesis, independently of the presence of PCNA. This stimulation may be due predominantly to an increase of initiation frequency and also to increased processivity. Also observed as a dimeric complex with POLD2 (Pol-delta2 complex). Pol-delta2 is relatively insensitive to the PCNA stimulation (2-5-fold) compared to Pol-delta4 that is stimulated by over 50-fold. The DNA polymerase delta complex interacts with POLDIP2; this interaction is probably mediated through direct binding to POLD2. Interacts with CIAO1. Interacts with POLDIP2. Interacts with RFC1. Requires [4Fe-4S] cluster as cofactor. Widely expressed, with high levels of expression in heart and lung.

It is found in the nucleus. It catalyses the reaction DNA(n) + a 2'-deoxyribonucleoside 5'-triphosphate = DNA(n+1) + diphosphate. Its activity is regulated as follows. Regulated by alteration of quaternary structure. Exhibits burst rates of DNA synthesis are about 5 times faster in the presence of POLD4 (Pol-delta4 complex) than in its absence (Pol-delta3 complex), while the affinity of the enzyme for its DNA and dNTP substrates appears unchanged. The Pol-delta3 complex is more likely to proofread DNA synthesis because it cleaves single-stranded DNA twice as fast and transfers mismatched DNA from the polymerase to the exonuclease sites 9 times faster compared to the Pol-delta3 complex. Pol-delta3 also extends mismatched primers 3 times more slowly in the absence of POLD4. The conversion of Pol-delta4 into Pol-delta3 is induced by genotoxic stress or by replication stress leading POLD4 degradation. Stimulated in the presence of PCNA. This stimulation is further increased in the presence of KCTD13/PDIP1, most probably via direct interaction between KCTD13 and POLD2. Its function is as follows. As the catalytic component of the trimeric (Pol-delta3 complex) and tetrameric DNA polymerase delta complexes (Pol-delta4 complex), plays a crucial role in high fidelity genome replication, including in lagging strand synthesis, and repair. Exhibits both DNA polymerase and 3'- to 5'-exonuclease activities. Requires the presence of accessory proteins POLD2, POLD3 and POLD4 for full activity. Depending upon the absence (Pol-delta3) or the presence of POLD4 (Pol-delta4), displays differences in catalytic activity. Most notably, expresses higher proofreading activity in the context of Pol-delta3 compared with that of Pol-delta4. Although both Pol-delta3 and Pol-delta4 process Okazaki fragments in vitro, Pol-delta3 may be better suited to fulfill this task, exhibiting near-absence of strand displacement activity compared to Pol-delta4 and stalling on encounter with the 5'-blocking oligonucleotides. Pol-delta3 idling process may avoid the formation of a gap, while maintaining a nick that can be readily ligated. Along with DNA polymerase kappa, DNA polymerase delta carries out approximately half of nucleotide excision repair (NER) synthesis following UV irradiation. Under conditions of DNA replication stress, in the presence of POLD3 and POLD4, may catalyze the repair of broken replication forks through break-induced replication (BIR). Involved in the translesion synthesis (TLS) of templates carrying O6-methylguanine, 8oxoG or abasic sites. In Homo sapiens (Human), this protein is DNA polymerase delta catalytic subunit.